We begin with the raw amino-acid sequence, 1089 residues long: MQTTDLGNKEYGKIWHRKPSPSTNEGIIVNIVHVDASHLSKSTRFLQAAFDSAGDCFLAGDHLGNVYMFNLNRNRFDLVQKTMQACTAIAFNLHRKTEFLVALADNSVKCFDAGAKELVSWMRGHESAVTSISIHASGRYAVTTSSDTAQLWDLDTFQRKRKLNVRQSVGIQKVFFLPLSNTILSCFKDDSIFAWESDTLACKYQLPIPEDETKLHYKAFAITRDGRMLAAGGKSKNLHLWCLDSKQLFRIIQMPAKVRSVQQLEFLPDNFDGGSSQILGVLSQDGIMRFINIQTCKLVFDIGNPDNRVVTSSVSPNGRYITSVMENGSLNIYSVQALSKELNKPPPPLVKMVDLSKDKDSTGNKSGVSRASQEKVRVSSGRTCRPWKTKDPIVRTKYLRPEDTTASEDKENALPAGLNKPRLQAMLKGFGEYPAKYRMFIWRSLLQLPENHAAFSSLLDKGTHSQYKLLHQEYPIKSRKLLRVLQRTLSALAHWSAIFGETKYLPLLAFPFVKLFQNNQLICFEVVATVITNWCQHWFEYFPNPPINILGMVENLLAHHDKELLQHFINHGVNSQVYAWPILETLFSEVLTREEWLRLFDNVFSNHPSFLLMAVVSYIISSRSPLLHCNQKDDFEYFFHHRNNLDISNMIREAYHLMDTSPAEIHPQRLLSDFEPLTRGQYPIFNKYPKFIVDYQGQERERIRQEEMEYLRERQLTQEVEAEAVKRRLEDQAWYQQQELLKGAEEQRRKLLMDEEQKLLHQRQRLATVKRELRLKELQLLDAARRRFLRYQQDQRKMELRRLDDEIERKVSLREQETATIVKDVEIRQMELEAQRRFFEQQLAKEQEAVTQDMKGELDANRRRADLEEQMFWRLMETEEDLKDQKLLEESLAKAERLCVETDWKIQSLQKQKCDDWERGKRYEEISKLTEDVQEKERELCNVLKDMETRKWAEVSQKMTELEREKLAGSAQQAQRQQFLQEKLRQEAGPIDISGEDGNEYFERLRDLNRSSMQKDFSSSDEQHVPENVCLNDVSASDSSTHFSLDRGRGELERGERALISEVRELRQKLASQAHKKYPHLHFSQTSWS.

7 WD repeats span residues 33–74 (HVDA…LNRN), 75–116 (RFDL…AGAK), 117–157 (ELVS…LDTF), 158–200 (QRKR…SDTL), 201–248 (ACKY…SKQL), 249–296 (FRII…IQTC), and 297–334 (KLVFDIGNPDNRVVTSSVSPNGRYITSVMENGSLNIYS). Residues 355-383 (LSKDKDSTGNKSGVSRASQEKVRVSSGRT) are disordered. A Rab-GAP TBC domain is found at 432–607 (EYPAKYRMFI…RLFDNVFSNH (176 aa)). Coiled-coil stretches lie at residues 698–852 (QERE…AVTQ), 892–951 (LAKA…ETRK), and 1050–1077 (GELERGERALISEVRELRQKLASQAHKK).

Its subcellular location is the cytoplasm. It is found in the cytoskeleton. It localises to the microtubule organizing center. The protein resides in the centrosome. The protein localises to the centriolar satellite. Its subcellular location is the cilium basal body. Its function is as follows. Molecular adapter which is involved in cilium biogenesis. Part of a functional complex including OFD1 a centriolar protein involved in cilium assembly. Could regulate the cAMP-dependent phosphorylation of OFD1, and its subsequent ubiquitination by PJA2 which ultimately leads to its proteasomal degradation. This chain is TBC1 domain family member 31, found in Xenopus laevis (African clawed frog).